A 195-amino-acid polypeptide reads, in one-letter code: HTH-type transcriptional regulator BetI (195 aa).

One can recognise an HTH tetR-type domain in the interval 8-68 (PIRRRQLIDA…ATMRDITSQL (61 aa)). The segment at residues 31 to 50 (TIAQIARRAGVSTGIISHYF) is a DNA-binding region (H-T-H motif).

It functions in the pathway amine and polyamine biosynthesis; betaine biosynthesis via choline pathway [regulation]. Its function is as follows. Repressor involved in the biosynthesis of the osmoprotectant glycine betaine. It represses transcription of the choline transporter BetT and the genes of BetAB involved in the synthesis of glycine betaine. The protein is HTH-type transcriptional regulator BetI of Klebsiella pneumoniae (strain 342).